The chain runs to 423 residues: SH2 domain-containing protein 5 (423 aa).

The region spanning 28–146 (AQYVGSFPVD…LLCRSFQLAY (119 aa)) is the PID domain. The 97-residue stretch at 296–392 (WAFAGISRPC…LDMGRLNPTY (97 aa)) folds into the SH2 domain. The interval 392-423 (YEEQDCGPPGRPPRTLRPLSHAKSEAELQGLG) is disordered.

In terms of assembly, interacts with BCR.

Its subcellular location is the postsynaptic density. Functionally, may be involved in synaptic plasticity regulation through the control of Rac-GTP levels. This Homo sapiens (Human) protein is SH2 domain-containing protein 5.